The chain runs to 173 residues: Putative metal-dependent hydrolase BT9727_2476 (173 aa).

Residues histidine 65, histidine 156, and histidine 160 each contribute to the Zn(2+) site.

The protein belongs to the metal hydrolase YfiT family. Homodimer. It depends on Zn(2+) as a cofactor.

It localises to the cytoplasm. Functionally, possible metal-dependent hydrolase. This chain is Putative metal-dependent hydrolase BT9727_2476, found in Bacillus thuringiensis subsp. konkukian (strain 97-27).